Reading from the N-terminus, the 89-residue chain is Small ribosomal subunit protein uS15 (89 aa).

Belongs to the universal ribosomal protein uS15 family. As to quaternary structure, part of the 30S ribosomal subunit. Forms a bridge to the 50S subunit in the 70S ribosome, contacting the 23S rRNA.

Its function is as follows. One of the primary rRNA binding proteins, it binds directly to 16S rRNA where it helps nucleate assembly of the platform of the 30S subunit by binding and bridging several RNA helices of the 16S rRNA. Forms an intersubunit bridge (bridge B4) with the 23S rRNA of the 50S subunit in the ribosome. The sequence is that of Small ribosomal subunit protein uS15 from Methylocella silvestris (strain DSM 15510 / CIP 108128 / LMG 27833 / NCIMB 13906 / BL2).